A 505-amino-acid chain; its full sequence is MSGASSSEQNNNSYETKTPNLRMSEKKCSWASYMTNSPTLIVMIGLPARGKTYVSKKLTRYLNWIGVPTKVFNLGVYRREAVKSYKSYDFFRHDNEEAMKIRKQCALVALEDVKAYLTEENGQIAVFDATNTTRERRDMILNFAEQNSFKVFFVESVCDDPDVIAANILEVKVSSPDYPERNRENVMEDFLKRIECYKVTYRPLDPDNYDKDLSFIKVINVGQRFLVNRVQDYIQSKIVYYLMNIHVQPRTIYLCRHGESEFNLLGKIGGDSGLSVRGKQFAQALRKFLEEQEITDLKVWTSQLKRTIQTAESLGVPYEQWKILNEIDAGVCEEMTYAEIEKRYPEEFALRDQEKYLYRYPGGESYQDLVQRLEPVIMELERQGNVLVISHQAVMRCLLAYFLDKGADELPYLRCPLHTIFKLTPVAYGCKVETIKLNVEAVNTHRDKPTNNFPKNQTPVRMRRNSFTPLSSSNTIRRPRNYSVGSRPLKPLSPLRAQDMQEGAD.

The segment at 1 to 20 is disordered; that stretch reads MSGASSSEQNNNSYETKTPN. Ser-2 is subject to N-acetylserine. Positions 2-248 are 6-phosphofructo-2-kinase; that stretch reads SGASSSEQNN…VYYLMNIHVQ (247 aa). Ser-29 is modified (phosphoserine; by PKA). 45-53 is a binding site for ATP; that stretch reads GLPARGKTY. Beta-D-fructose 6-phosphate contacts are provided by Arg-78 and Arg-102. Residue Asp-128 is part of the active site. The beta-D-fructose 6-phosphate site is built by Thr-130 and Arg-136. Cys-158 is an active-site residue. ATP is bound at residue 167–172; it reads NILEVK. Residues Lys-172, Arg-193, and Tyr-197 each coordinate beta-D-fructose 6-phosphate. The tract at residues 249 to 505 is fructose-2,6-bisphosphatase; that stretch reads PRTIYLCRHG…RAQDMQEGAD (257 aa). Arg-256 is a beta-D-fructose 2,6-bisphosphate binding site. His-257 functions as the Tele-phosphohistidine intermediate in the catalytic mechanism. Residues Asn-263 and Gly-269 each coordinate beta-D-fructose 2,6-bisphosphate. Catalysis depends on Glu-326, which acts as the Proton donor/acceptor. Beta-D-fructose 2,6-bisphosphate-binding residues include Tyr-337, Arg-351, Lys-355, Tyr-366, Gln-392, and Arg-396. Residue 348 to 351 coordinates ATP; that stretch reads FALR. Residues 392–396 and Tyr-428 each bind ATP; that span reads QAVMR. Positions 445–505 are disordered; the sequence is HRDKPTNNFP…RAQDMQEGAD (61 aa). A compositionally biased stretch (polar residues) spans 450–476; it reads TNNFPKNQTPVRMRRNSFTPLSSSNTI. Ser-466 bears the Phosphoserine; by AMPK mark. Phosphothreonine occurs at positions 468 and 475. A Phosphoserine; by BRAF modification is found at Ser-483. Ser-486 and Ser-493 each carry phosphoserine.

In the C-terminal section; belongs to the phosphoglycerate mutase family. In terms of assembly, homodimer. Forms a heterodimer with PFKFB3. Post-translationally, phosphorylation by AMPK stimulates activity. In terms of tissue distribution, heart.

The enzyme catalyses beta-D-fructose 2,6-bisphosphate + H2O = beta-D-fructose 6-phosphate + phosphate. It catalyses the reaction beta-D-fructose 6-phosphate + ATP = beta-D-fructose 2,6-bisphosphate + ADP + H(+). Phosphorylation results in the activation of the kinase activity. In terms of biological role, synthesis and degradation of fructose 2,6-bisphosphate. In Homo sapiens (Human), this protein is 6-phosphofructo-2-kinase/fructose-2,6-bisphosphatase 2.